The following is a 302-amino-acid chain: Dioxygenase ALT11 (302 aa).

The tract at residues 1-22 is disordered; sequence MSSPELPSQMGVPNGHTKLQEV. His147, Asp149, and His223 together coordinate Fe cation.

This sequence belongs to the PhyH family. In terms of assembly, homodimer. It depends on Fe cation as a cofactor.

The protein operates within mycotoxin biosynthesis. In terms of biological role, dioxygenase; part of the gene cluster that mediates the biosynthesis of the host-selective toxins (HSTs) AAL-toxins, sphinganine-analog mycotoxins responsible for Alternaria stem canker on tomato by the tomato pathotype. The biosynthesis starts with the polyketide synthase ALT1-catalyzed C-16 carbon chain assembly from one starter acetyl-CoA unit with malonyl-CoA extender units. ALT1 also selectively transfers methyl groups at the first and the third cycle of chain elongation for AAL toxin. The C-16 polyketide chain is released from the enzyme by a nucleophilic attack of a carbanion, which is derived from R-carbon of glycin by decarboxylation, on the carbonyl carbon of polyketide acyl chain. This step is probably catalyzed by a pyridoxal 5'-phosphate-dependent aminoacyl transferase ALT4. The respective functions of the other enzymes encoded by the cluster have still to be elucidated. The sphingosine N-acyltransferase-like protein ALT7 seems not to act as a resistance/self-tolerance factor against the toxin in the toxin biosynthetic gene cluster, contrary to what is expected. The protein is Dioxygenase ALT11 of Alternaria alternata (Alternaria rot fungus).